The primary structure comprises 271 residues: 2,3,4,5-tetrahydropyridine-2,6-dicarboxylate N-succinyltransferase (271 aa).

Substrate-binding residues include R103 and D140.

Belongs to the transferase hexapeptide repeat family. In terms of assembly, homotrimer.

It localises to the cytoplasm. It catalyses the reaction (S)-2,3,4,5-tetrahydrodipicolinate + succinyl-CoA + H2O = (S)-2-succinylamino-6-oxoheptanedioate + CoA. The protein operates within amino-acid biosynthesis; L-lysine biosynthesis via DAP pathway; LL-2,6-diaminopimelate from (S)-tetrahydrodipicolinate (succinylase route): step 1/3. The protein is 2,3,4,5-tetrahydropyridine-2,6-dicarboxylate N-succinyltransferase of Methylococcus capsulatus (strain ATCC 33009 / NCIMB 11132 / Bath).